A 381-amino-acid polypeptide reads, in one-letter code: Succinate--CoA ligase [ADP-forming] subunit beta (381 aa).

Residues 9–236 (KELLRVAGVP…ESSEAPSEVD (228 aa)) enclose the ATP-grasp domain. Residues K45, 52-54 (GRG), A94, and E99 contribute to the ATP site. Residues N191 and D205 each coordinate Mg(2+). Residues N256 and 313–315 (GIT) contribute to the substrate site.

Belongs to the succinate/malate CoA ligase beta subunit family. Heterotetramer of two alpha and two beta subunits. It depends on Mg(2+) as a cofactor.

It catalyses the reaction succinate + ATP + CoA = succinyl-CoA + ADP + phosphate. The enzyme catalyses GTP + succinate + CoA = succinyl-CoA + GDP + phosphate. The protein operates within carbohydrate metabolism; tricarboxylic acid cycle; succinate from succinyl-CoA (ligase route): step 1/1. Functionally, succinyl-CoA synthetase functions in the citric acid cycle (TCA), coupling the hydrolysis of succinyl-CoA to the synthesis of either ATP or GTP and thus represents the only step of substrate-level phosphorylation in the TCA. The beta subunit provides nucleotide specificity of the enzyme and binds the substrate succinate, while the binding sites for coenzyme A and phosphate are found in the alpha subunit. This Gemmatimonas aurantiaca (strain DSM 14586 / JCM 11422 / NBRC 100505 / T-27) protein is Succinate--CoA ligase [ADP-forming] subunit beta.